The sequence spans 466 residues: 3-isopropylmalate dehydratase large subunit (466 aa).

[4Fe-4S] cluster-binding residues include cysteine 347, cysteine 407, and cysteine 410.

This sequence belongs to the aconitase/IPM isomerase family. LeuC type 1 subfamily. Heterodimer of LeuC and LeuD. [4Fe-4S] cluster serves as cofactor.

The enzyme catalyses (2R,3S)-3-isopropylmalate = (2S)-2-isopropylmalate. Its pathway is amino-acid biosynthesis; L-leucine biosynthesis; L-leucine from 3-methyl-2-oxobutanoate: step 2/4. In terms of biological role, catalyzes the isomerization between 2-isopropylmalate and 3-isopropylmalate, via the formation of 2-isopropylmaleate. In Shewanella halifaxensis (strain HAW-EB4), this protein is 3-isopropylmalate dehydratase large subunit.